A 449-amino-acid chain; its full sequence is Tripartite motif-containing protein 64 (449 aa).

The RING-type zinc finger occupies 15–56 (CCICVNYFIDPVTIDCGHSFCRPCLCLCSEEGRAPMRCPSCR). The B box-type zinc finger occupies 87–128 (SSDNICVLHEETKELFCEADKRLLCGPCSESPEHMAHSHSPI). Positions 92, 95, 114, and 120 each coordinate Zn(2+). Residues 189–225 (LDEEEQRHLQALEREAEELFQQLQDSQVRMTQHLERM) are a coiled coil. The region spanning 269-449 (LTSWCITGVL…LRPFFCFGCT (181 aa)) is the B30.2/SPRY domain.

Belongs to the TRIM/RBCC family.

The polypeptide is Tripartite motif-containing protein 64 (TRIM64) (Homo sapiens (Human)).